The sequence spans 65 residues: Large ribosomal subunit protein bL35 (65 aa).

The protein belongs to the bacterial ribosomal protein bL35 family.

The polypeptide is Large ribosomal subunit protein bL35 (Oleidesulfovibrio alaskensis (strain ATCC BAA-1058 / DSM 17464 / G20) (Desulfovibrio alaskensis)).